The chain runs to 502 residues: Aspartyl/glutamyl-tRNA(Asn/Gln) amidotransferase subunit B (502 aa).

Positions 272-293 (TRHWHEDTRSTTSGRPKSDADD) are disordered.

The protein belongs to the GatB/GatE family. GatB subfamily. As to quaternary structure, heterotrimer of A, B and C subunits.

The enzyme catalyses L-glutamyl-tRNA(Gln) + L-glutamine + ATP + H2O = L-glutaminyl-tRNA(Gln) + L-glutamate + ADP + phosphate + H(+). The catalysed reaction is L-aspartyl-tRNA(Asn) + L-glutamine + ATP + H2O = L-asparaginyl-tRNA(Asn) + L-glutamate + ADP + phosphate + 2 H(+). Its function is as follows. Allows the formation of correctly charged Asn-tRNA(Asn) or Gln-tRNA(Gln) through the transamidation of misacylated Asp-tRNA(Asn) or Glu-tRNA(Gln) in organisms which lack either or both of asparaginyl-tRNA or glutaminyl-tRNA synthetases. The reaction takes place in the presence of glutamine and ATP through an activated phospho-Asp-tRNA(Asn) or phospho-Glu-tRNA(Gln). The polypeptide is Aspartyl/glutamyl-tRNA(Asn/Gln) amidotransferase subunit B (Paenarthrobacter aurescens (strain TC1)).